We begin with the raw amino-acid sequence, 246 residues long: Histone H1 (246 aa).

Disordered stretches follow at residues 1–51 (MATD…PTHL) and 105–246 (GGKL…KAKK). Low complexity predominate over residues 9–34 (PAPLVDAAPEAPADAPAAPAADANAA). Residues 35 to 47 (KAKKATAPKKRAS) are compositionally biased toward basic residues. The H15 domain maps to 49-119 (THLPYAEMVS…KVKNSYKLSS (71 aa)). 2 stretches are compositionally biased toward basic residues: residues 129 to 189 (AAPK…KAKP) and 198 to 208 (PLAKKAGRAKA). Residues 224–235 (KKAAPSKKAATP) are compositionally biased toward low complexity.

It belongs to the histone H1/H5 family.

The protein localises to the nucleus. It localises to the chromosome. In terms of biological role, histones H1 are necessary for the condensation of nucleosome chains into higher-order structures. The protein is Histone H1 of Zea mays (Maize).